Here is an 805-residue protein sequence, read N- to C-terminus: Leucine--tRNA ligase (805 aa).

The short motif at Pro-40–His-51 is the 'HIGH' region element. The 'KMSKS' region motif lies at Lys-576–Ser-580. ATP is bound at residue Lys-579.

The protein belongs to the class-I aminoacyl-tRNA synthetase family.

Its subcellular location is the cytoplasm. It catalyses the reaction tRNA(Leu) + L-leucine + ATP = L-leucyl-tRNA(Leu) + AMP + diphosphate. This is Leucine--tRNA ligase from Chlorobium phaeovibrioides (strain DSM 265 / 1930) (Prosthecochloris vibrioformis (strain DSM 265)).